The primary structure comprises 103 residues: Large ribosomal subunit protein bL21 (103 aa).

It belongs to the bacterial ribosomal protein bL21 family. As to quaternary structure, part of the 50S ribosomal subunit. Contacts protein L20.

Its function is as follows. This protein binds to 23S rRNA in the presence of protein L20. This is Large ribosomal subunit protein bL21 from Legionella pneumophila (strain Paris).